Here is a 382-residue protein sequence, read N- to C-terminus: Protein delta homolog 2 (382 aa).

The N-terminal stretch at 1–26 (MPSGCRCLNLVCLLCILGATSQPARA) is a signal peptide. 4 EGF-like domains span residues 27-58 (DDCS…LHCE), 62-89 (RMPG…KFCD), 91-129 (DEHI…RGCE), and 131-172 (KAGP…AHCE). Residues 27 to 305 (DDCSSHCDLA…RQEAGLGESS (279 aa)) are Extracellular-facing. Cystine bridges form between Cys-29-Cys-40, Cys-33-Cys-46, Cys-48-Cys-57, Cys-66-Cys-71, Cys-79-Cys-88, Cys-95-Cys-107, Cys-101-Cys-117, Cys-119-Cys-128, Cys-135-Cys-148, Cys-142-Cys-160, Cys-162-Cys-171, Cys-178-Cys-189, Cys-183-Cys-198, Cys-200-Cys-209, Cys-216-Cys-227, Cys-221-Cys-236, and Cys-238-Cys-247. N-linked (GlcNAc...) asparagine glycosylation occurs at Asn-157. The EGF-like 5; calcium-binding domain occupies 174 to 210 (NVDDCLMRPCANGATCIDGINRFSCLCPEGFAGRFCT). An EGF-like 6; calcium-binding domain is found at 212–248 (NLDDCASRPCQRGARCRDRVHDFDCLCPSGYGGKTCE). A helical membrane pass occupies residues 306–326 (LVALVVFGSLTAALVLATVLL). At 327–382 (TLRAWRRGICPTGPCCDPAPHYAPARQDQECQVSMLPAGFPLSPDLPPEPGKTTAL) the chain is on the cytoplasmic side.

It is found in the membrane. Functionally, regulates adipogenesis. This is Protein delta homolog 2 (Dlk2) from Rattus norvegicus (Rat).